The primary structure comprises 215 residues: Phosphatidylserine decarboxylase proenzyme (215 aa).

Residue serine 186 is the Schiff-base intermediate with substrate; via pyruvic acid of the active site. Serine 186 carries the pyruvic acid (Ser); by autocatalysis modification.

This sequence belongs to the phosphatidylserine decarboxylase family. PSD-A subfamily. As to quaternary structure, heterodimer of a large membrane-associated beta subunit and a small pyruvoyl-containing alpha subunit. Requires pyruvate as cofactor. Post-translationally, is synthesized initially as an inactive proenzyme. Formation of the active enzyme involves a self-maturation process in which the active site pyruvoyl group is generated from an internal serine residue via an autocatalytic post-translational modification. Two non-identical subunits are generated from the proenzyme in this reaction, and the pyruvate is formed at the N-terminus of the alpha chain, which is derived from the carboxyl end of the proenzyme. The post-translation cleavage follows an unusual pathway, termed non-hydrolytic serinolysis, in which the side chain hydroxyl group of the serine supplies its oxygen atom to form the C-terminus of the beta chain, while the remainder of the serine residue undergoes an oxidative deamination to produce ammonia and the pyruvoyl prosthetic group on the alpha chain.

It localises to the cell membrane. The enzyme catalyses a 1,2-diacyl-sn-glycero-3-phospho-L-serine + H(+) = a 1,2-diacyl-sn-glycero-3-phosphoethanolamine + CO2. It participates in phospholipid metabolism; phosphatidylethanolamine biosynthesis; phosphatidylethanolamine from CDP-diacylglycerol: step 2/2. Catalyzes the formation of phosphatidylethanolamine (PtdEtn) from phosphatidylserine (PtdSer). The protein is Phosphatidylserine decarboxylase proenzyme of Pelagibacter ubique (strain HTCC1062).